Here is a 179-residue protein sequence, read N- to C-terminus: Large ribosomal subunit protein uL6 (179 aa).

The protein belongs to the universal ribosomal protein uL6 family. In terms of assembly, part of the 50S ribosomal subunit.

In terms of biological role, this protein binds to the 23S rRNA, and is important in its secondary structure. It is located near the subunit interface in the base of the L7/L12 stalk, and near the tRNA binding site of the peptidyltransferase center. This Halothermothrix orenii (strain H 168 / OCM 544 / DSM 9562) protein is Large ribosomal subunit protein uL6.